Reading from the N-terminus, the 82-residue chain is DNA-directed RNA polymerase subunit omega (82 aa).

It belongs to the RNA polymerase subunit omega family. As to quaternary structure, the RNAP catalytic core consists of 2 alpha, 1 beta, 1 beta' and 1 omega subunit. When a sigma factor is associated with the core the holoenzyme is formed, which can initiate transcription.

The enzyme catalyses RNA(n) + a ribonucleoside 5'-triphosphate = RNA(n+1) + diphosphate. Promotes RNA polymerase assembly. Latches the N- and C-terminal regions of the beta' subunit thereby facilitating its interaction with the beta and alpha subunits. The chain is DNA-directed RNA polymerase subunit omega from Lacticaseibacillus casei (strain BL23) (Lactobacillus casei).